A 223-amino-acid polypeptide reads, in one-letter code: Cytidylate kinase (223 aa).

17–25 (GPTASGKGT) contacts ATP.

The protein belongs to the cytidylate kinase family. Type 1 subfamily.

It is found in the cytoplasm. It carries out the reaction CMP + ATP = CDP + ADP. The catalysed reaction is dCMP + ATP = dCDP + ADP. This is Cytidylate kinase from Bordetella pertussis (strain Tohama I / ATCC BAA-589 / NCTC 13251).